Consider the following 359-residue polypeptide: Holliday junction branch migration complex subunit RuvB (359 aa).

Residues 1-10 (MPEHDPHQEN) show a composition bias toward basic and acidic residues. The interval 1-20 (MPEHDPHQENRTVSSVRLED) is disordered. The segment at 4–188 (HDPHQENRTV…FGIPLRLIFY (185 aa)) is large ATPase domain (RuvB-L). Residues Leu-27, Arg-28, Gly-69, Lys-72, Thr-73, Thr-74, 135–137 (EDF), Arg-178, Tyr-188, and Arg-225 contribute to the ATP site. Position 73 (Thr-73) interacts with Mg(2+). The tract at residues 189 to 259 (TASELELIVS…TADAALQRLE (71 aa)) is small ATPAse domain (RuvB-S). The tract at residues 262-359 (SLGLDAMDRR…LLHRDGSADE (98 aa)) is head domain (RuvB-H). DNA is bound by residues Arg-298, Arg-317, and Arg-322.

Belongs to the RuvB family. In terms of assembly, homohexamer. Forms an RuvA(8)-RuvB(12)-Holliday junction (HJ) complex. HJ DNA is sandwiched between 2 RuvA tetramers; dsDNA enters through RuvA and exits via RuvB. An RuvB hexamer assembles on each DNA strand where it exits the tetramer. Each RuvB hexamer is contacted by two RuvA subunits (via domain III) on 2 adjacent RuvB subunits; this complex drives branch migration. In the full resolvosome a probable DNA-RuvA(4)-RuvB(12)-RuvC(2) complex forms which resolves the HJ.

The protein resides in the cytoplasm. It carries out the reaction ATP + H2O = ADP + phosphate + H(+). The RuvA-RuvB-RuvC complex processes Holliday junction (HJ) DNA during genetic recombination and DNA repair, while the RuvA-RuvB complex plays an important role in the rescue of blocked DNA replication forks via replication fork reversal (RFR). RuvA specifically binds to HJ cruciform DNA, conferring on it an open structure. The RuvB hexamer acts as an ATP-dependent pump, pulling dsDNA into and through the RuvAB complex. RuvB forms 2 homohexamers on either side of HJ DNA bound by 1 or 2 RuvA tetramers; 4 subunits per hexamer contact DNA at a time. Coordinated motions by a converter formed by DNA-disengaged RuvB subunits stimulates ATP hydrolysis and nucleotide exchange. Immobilization of the converter enables RuvB to convert the ATP-contained energy into a lever motion, pulling 2 nucleotides of DNA out of the RuvA tetramer per ATP hydrolyzed, thus driving DNA branch migration. The RuvB motors rotate together with the DNA substrate, which together with the progressing nucleotide cycle form the mechanistic basis for DNA recombination by continuous HJ branch migration. Branch migration allows RuvC to scan DNA until it finds its consensus sequence, where it cleaves and resolves cruciform DNA. The sequence is that of Holliday junction branch migration complex subunit RuvB from Granulibacter bethesdensis (strain ATCC BAA-1260 / CGDNIH1).